The following is a 314-amino-acid chain: MGLWALVAFCLLSLILVGSAEQCGGQAGGRVCPGGACCSKFGWCGNTADYCGSGCQSQCSSTGDIGQLITRSMFNDMLKHRNEGSCPGKGFYTYDAFIAAAKAFPGFGTTGDTTTRKREIAAFLAQTSHETTGGWASAPDGPYAWGYCYLREQGSPGAYCVPSAQWPCAAGRKYYGRGPIQISYNYNYGQAGKAIGVDLVNNPDLVATDAVISFKTAFWFWMTPQSPKPSCHNVITGGWTPSGADRSAGRLPGFGVITNIINGGVECGKGVVPQVQDRIGFYKRYCDILRVSYGNNLDCNNQRPFGSGLLLDTI.

Residues 1-20 (MGLWALVAFCLLSLILVGSA) form the signal peptide. The 41-residue stretch at 21 to 61 (EQCGGQAGGRVCPGGACCSKFGWCGNTADYCGSGCQSQCSS) folds into the Chitin-binding type-1 domain. Cystine bridges form between Cys23–Cys38, Cys32–Cys44, Cys37–Cys51, Cys55–Cys59, Cys86–Cys148, Cys160–Cys168, and Cys267–Cys299. Residue Glu130 is the Proton donor of the active site.

Belongs to the glycosyl hydrolase 19 family. Chitinase class I subfamily.

It catalyses the reaction Random endo-hydrolysis of N-acetyl-beta-D-glucosaminide (1-&gt;4)-beta-linkages in chitin and chitodextrins.. Functionally, defense against chitin-containing fungal pathogens. In Vitis vinifera (Grape), this protein is Basic endochitinase (CHIT1B).